A 457-amino-acid chain; its full sequence is Cysteine--tRNA ligase (457 aa).

C28 provides a ligand contact to Zn(2+). The 'HIGH' region signature appears at 30–40 (MTVYDLCHIGH). The Zn(2+) site is built by C209, H234, and E238. The 'KMSKS' region signature appears at 266 to 270 (KMSKS). Residue K269 participates in ATP binding.

It belongs to the class-I aminoacyl-tRNA synthetase family. In terms of assembly, monomer. Requires Zn(2+) as cofactor.

It localises to the cytoplasm. The catalysed reaction is tRNA(Cys) + L-cysteine + ATP = L-cysteinyl-tRNA(Cys) + AMP + diphosphate. This chain is Cysteine--tRNA ligase, found in Chromobacterium violaceum (strain ATCC 12472 / DSM 30191 / JCM 1249 / CCUG 213 / NBRC 12614 / NCIMB 9131 / NCTC 9757 / MK).